Reading from the N-terminus, the 76-residue chain is Small integral membrane protein 7 (76 aa).

Residues methionine 1–alanine 17 form the signal peptide. Over valine 18–tyrosine 54 the chain is Extracellular. The chain crosses the membrane as a helical span at residues phenylalanine 55 to glycine 75. Residue serine 76 is a topological domain, cytoplasmic.

The protein belongs to the SMIM7 family.

It is found in the membrane. The polypeptide is Small integral membrane protein 7 (smim7) (Xenopus tropicalis (Western clawed frog)).